A 198-amino-acid chain; its full sequence is Carnitine operon protein CaiE (198 aa).

Residues 179-198 (VEENRPRLKGTTDVKPKSAQ) form a disordered region. Positions 180–198 (EENRPRLKGTTDVKPKSAQ) are enriched in basic and acidic residues.

This sequence belongs to the transferase hexapeptide repeat family.

It functions in the pathway amine and polyamine metabolism; carnitine metabolism. In terms of biological role, overproduction of CaiE stimulates the activity of CaiB and CaiD. This Salmonella choleraesuis (strain SC-B67) protein is Carnitine operon protein CaiE.